A 64-amino-acid polypeptide reads, in one-letter code: Putative neurotoxin 5 (64 aa).

A signal peptide spans 1–18 (MKNKFAALVITLFVLVLA).

This sequence belongs to the scolopendra neurotoxin 6 family. Post-translationally, contains 3 disulfide bonds. Expressed by the venom gland.

It is found in the secreted. This Scolopendra mutilans (Chinese red-headed centipede) protein is Putative neurotoxin 5.